The chain runs to 224 residues: Pleckstrin homology domain-containing family B member 2 (224 aa).

The region spanning 2 to 109 (AFVKSGWLLR…WKIALQDART (108 aa)) is the PH domain. Lysine 20 lines the a 1,2-diacyl-sn-glycero-3-phospho-L-serine pocket.

It localises to the recycling endosome membrane. Functionally, involved in retrograde transport of recycling endosomes. This Gallus gallus (Chicken) protein is Pleckstrin homology domain-containing family B member 2 (PLEKHB2).